A 241-amino-acid polypeptide reads, in one-letter code: MIKLGVNIDHVATLRQARGTTYPDPIEAALIAESAGADAITLHLREDRRHIQDRDVEILRGALKTRMNLESAVTDEMIGFALRIKPHDICLVPERREELTTEGGLDVARHFEQVQRACHRLAEAGIRVSLFVDAEPAQIDASVEAGAPVIEIHTGHYADAQTTDEQQGELERVRAAVSKGLNHGLTVNAGHGLHYLNVQAIAAIPGVSELNIGHAIVARALFVGFERAVREMKNLMLEACK.

3-amino-2-oxopropyl phosphate is bound at residue asparagine 7. 9-10 (DH) contacts 1-deoxy-D-xylulose 5-phosphate. Arginine 18 contributes to the 3-amino-2-oxopropyl phosphate binding site. Histidine 43 serves as the catalytic Proton acceptor. 1-deoxy-D-xylulose 5-phosphate-binding residues include arginine 45 and histidine 50. Catalysis depends on glutamate 70, which acts as the Proton acceptor. Residue threonine 100 participates in 1-deoxy-D-xylulose 5-phosphate binding. The active-site Proton donor is the histidine 191. Residues glycine 192 and 213 to 214 (GH) each bind 3-amino-2-oxopropyl phosphate.

It belongs to the PNP synthase family. In terms of assembly, homooctamer; tetramer of dimers.

It is found in the cytoplasm. It carries out the reaction 3-amino-2-oxopropyl phosphate + 1-deoxy-D-xylulose 5-phosphate = pyridoxine 5'-phosphate + phosphate + 2 H2O + H(+). It participates in cofactor biosynthesis; pyridoxine 5'-phosphate biosynthesis; pyridoxine 5'-phosphate from D-erythrose 4-phosphate: step 5/5. Its function is as follows. Catalyzes the complicated ring closure reaction between the two acyclic compounds 1-deoxy-D-xylulose-5-phosphate (DXP) and 3-amino-2-oxopropyl phosphate (1-amino-acetone-3-phosphate or AAP) to form pyridoxine 5'-phosphate (PNP) and inorganic phosphate. The chain is Pyridoxine 5'-phosphate synthase from Nitrosospira multiformis (strain ATCC 25196 / NCIMB 11849 / C 71).